We begin with the raw amino-acid sequence, 175 residues long: Large ribosomal subunit protein bL9 (175 aa).

It belongs to the bacterial ribosomal protein bL9 family.

Its function is as follows. Binds to the 23S rRNA. The sequence is that of Large ribosomal subunit protein bL9 from Orientia tsutsugamushi (strain Boryong) (Rickettsia tsutsugamushi).